Consider the following 185-residue polypeptide: Meiotic expression up-regulated protein 31 (185 aa).

This Schizosaccharomyces pombe (strain 972 / ATCC 24843) (Fission yeast) protein is Meiotic expression up-regulated protein 31 (meu31).